A 396-amino-acid polypeptide reads, in one-letter code: 8-amino-7-oxononanoate synthase (396 aa).

Residue R19 participates in substrate binding. Pyridoxal 5'-phosphate is bound at residue 106-107 (GY). Position 131 (H131) interacts with substrate. Pyridoxal 5'-phosphate-binding residues include S176, H204, and T233. K236 carries the N6-(pyridoxal phosphate)lysine modification. T350 is a binding site for substrate.

The protein belongs to the class-II pyridoxal-phosphate-dependent aminotransferase family. BioF subfamily. As to quaternary structure, homodimer. Requires pyridoxal 5'-phosphate as cofactor.

It carries out the reaction 6-carboxyhexanoyl-[ACP] + L-alanine + H(+) = (8S)-8-amino-7-oxononanoate + holo-[ACP] + CO2. Its pathway is cofactor biosynthesis; biotin biosynthesis. Its function is as follows. Catalyzes the decarboxylative condensation of pimeloyl-[acyl-carrier protein] and L-alanine to produce 8-amino-7-oxononanoate (AON), [acyl-carrier protein], and carbon dioxide. This Pseudomonas syringae pv. syringae (strain B728a) protein is 8-amino-7-oxononanoate synthase.